The chain runs to 115 residues: Sericin-1 (115 aa).

A disordered region spans residues 1–115 (GSSGSSGSSG…GGSSSTSSSN (115 aa)).

In terms of tissue distribution, produced exclusively in the middle (MSG) section of silk glands.

It is found in the secreted. Functionally, provides the silk fibroin thread with a sticky coating. Acts as a cement by sticking silk threads together. In Galleria mellonella (Greater wax moth), this protein is Sericin-1 (SER1).